Reading from the N-terminus, the 124-residue chain is Small ribosomal subunit protein uS13c (124 aa).

The segment at 100–124 is disordered; the sequence is GQRTRTNARTRKGKVKTAVAKKKGR. Residues 101 to 124 are compositionally biased toward basic residues; sequence QRTRTNARTRKGKVKTAVAKKKGR.

Belongs to the universal ribosomal protein uS13 family. Part of the 30S ribosomal subunit.

The protein resides in the plastid. It localises to the chloroplast. Its function is as follows. Located at the top of the head of the 30S subunit, it contacts several helices of the 16S rRNA. The polypeptide is Small ribosomal subunit protein uS13c (Emiliania huxleyi (Coccolithophore)).